The chain runs to 651 residues: Aspartate--tRNA ligase, mitochondrial (651 aa).

The N-terminal 44 residues, 1-44, are a transit peptide targeting the mitochondrion; it reads MFCWLSRLCGELSTPTRRTTQLIWSSAARSMVLSSQRIPELSSF. T216 is subject to Phosphothreonine. S239 bears the Phosphoserine mark. The interval 241–244 is aspartate; that stretch reads QQFK. R263 lines the L-aspartate pocket. 263 to 265 provides a ligand contact to ATP; sequence RDE. K379 is modified (N6-acetyllysine). E532 serves as a coordination point for ATP. R539 contacts L-aspartate. Residue 581-584 coordinates ATP; that stretch reads GLDR.

Belongs to the class-II aminoacyl-tRNA synthetase family. Type 1 subfamily. Homodimer.

Its subcellular location is the mitochondrion matrix. It localises to the mitochondrion membrane. The catalysed reaction is tRNA(Asp) + L-aspartate + ATP = L-aspartyl-tRNA(Asp) + AMP + diphosphate. Catalyzes the attachment of aspartate to tRNA(Asp) in a two-step reaction: aspartate is first activated by ATP to form Asp-AMP and then transferred to the acceptor end of tRNA(Asp). The chain is Aspartate--tRNA ligase, mitochondrial (DARS2) from Bos taurus (Bovine).